The following is a 148-amino-acid chain: Lysozyme C (148 aa).

The N-terminal stretch at 1-18 is a signal peptide; the sequence is MKAVIILGLVLLSVTVQG. The C-type lysozyme domain occupies 19–148; it reads KIFERCELAR…VSQYVQGCGV (130 aa). 4 disulfides stabilise this stretch: Cys24-Cys146, Cys48-Cys134, Cys83-Cys99, and Cys95-Cys113. Residues Glu53 and Asp71 contribute to the active site.

This sequence belongs to the glycosyl hydrolase 22 family. As to quaternary structure, monomer.

The catalysed reaction is Hydrolysis of (1-&gt;4)-beta-linkages between N-acetylmuramic acid and N-acetyl-D-glucosamine residues in a peptidoglycan and between N-acetyl-D-glucosamine residues in chitodextrins.. Its function is as follows. Lysozymes have primarily a bacteriolytic function; those in tissues and body fluids are associated with the monocyte-macrophage system and enhance the activity of immunoagents. This Allenopithecus nigroviridis (Allen's swamp monkey) protein is Lysozyme C (LYZ).